The chain runs to 453 residues: MSTRDHVKQSPMPVQEGYPRSSKEFSPPSSRSRKRTWVRNLTMSLLIAAGAATFSKYIFPLGSILGAGSLQPIDPHDYAARADRILSTTPLIDGHNDLPYLIRLETKNKIYDHEKLPFEAGLLSHTDAKKIRQGKLGGQFWSVYVECPADPSAGIDDPSWAVRDTLEQIDVAKRLVDEYPDLLEYCETASCARSAFKKGRVGSFLGIEVHDLGVRYITVTHNCDNAFATAASTVAAGKPDHGLTDFGREFVKEMNRLGMLIDLSHVSHQTMRDVLSVTNAPVIFSHSSSYALSKHLRNVPDDVLRTVTKNGGVVMVTFVPLFLKVNDPASVTIHDAVDHILHVAKVAGWDHVGIGSDFDGTAVVPKGLENVSKYPRLVELLLERGVTDEQARKLVGENLLRVWSKAEDIAYAIQASGQKPNEETWSGRKWTAAADIPMPSMFNDSAERRKQLE.

Residues 1–33 form a disordered region; the sequence is MSTRDHVKQSPMPVQEGYPRSSKEFSPPSSRSR. The helical transmembrane segment at 41 to 63 threads the bilayer; it reads LTMSLLIAAGAATFSKYIFPLGS. Zn(2+) contacts are provided by His-95, Asp-97, and Glu-208. Cysteines 147 and 223 form a disulfide. Position 221 (His-221) interacts with substrate. Residues His-265 and His-286 each coordinate Zn(2+). Residues Arg-297 and Asp-357 each coordinate substrate. Residues Asn-370 and Asn-443 are each glycosylated (N-linked (GlcNAc...) asparagine).

This sequence belongs to the metallo-dependent hydrolases superfamily. Peptidase M19 family. It depends on Zn(2+) as a cofactor.

It localises to the membrane. The enzyme catalyses an L-aminoacyl-L-amino acid + H2O = 2 an L-alpha-amino acid. Functionally, hydrolyzes a wide range of dipeptides. The polypeptide is Putative dipeptidase UREG_03382 (Uncinocarpus reesii (strain UAMH 1704)).